A 633-amino-acid chain; its full sequence is E3 ubiquitin-protein ligase ZSWIM2 (633 aa).

The SWIM-type zinc finger occupies 54–87 (FRVFLGNPHVCNCSTFPKGGELCKHICWVLLKKF). Residues 147 to 198 (CSICQELLLEKKLPVTFCRFGCGNSIHIKCMKILANYQSTSNTSMLKCPLCR) form an RING-type 1 zinc finger. A ZZ-type zinc finger spans residues 229–280 (HLGIPCNNCKQFPIEGKCYKCTECIEYHLCQECFDSCCHLSHTFTFREKRNQ). Residues C234, C237, C249, C252, C258, C261, H267, and H270 each contribute to the Zn(2+) site. The RING-type 2 zinc finger occupies 344-388 (CLLCLKAFHLGQHTRLLPCTHKFHRKCIDNWLFHKCNSCPIDGQV).

In terms of assembly, dimer. Interacts with UBE2D1. Polyubiquitinated. Polyubiquitination is followed by degradation via the proteasome. Expression is testis-specific.

It carries out the reaction S-ubiquitinyl-[E2 ubiquitin-conjugating enzyme]-L-cysteine + [acceptor protein]-L-lysine = [E2 ubiquitin-conjugating enzyme]-L-cysteine + N(6)-ubiquitinyl-[acceptor protein]-L-lysine.. Functionally, E3 ubiquitin-protein ligase involved in the regulation of Fas-, DR3- and DR4-mediated apoptosis. Functions in conjunction with the UBE2D1, UBE2D3 and UBE2E1 E2 ubiquitin-conjugating enzymes. The sequence is that of E3 ubiquitin-protein ligase ZSWIM2 from Homo sapiens (Human).